Here is a 787-residue protein sequence, read N- to C-terminus: LPS-assembly protein LptD (787 aa).

An N-terminal signal peptide occupies residues 1 to 39 (MPPKTLFPLVPACDAAPRKKRLAVALLAVPGLVPAVSQA).

The protein belongs to the LptD family. Component of the lipopolysaccharide transport and assembly complex. Interacts with LptE and LptA.

Its subcellular location is the cell outer membrane. Functionally, together with LptE, is involved in the assembly of lipopolysaccharide (LPS) at the surface of the outer membrane. This is LPS-assembly protein LptD from Burkholderia pseudomallei (strain 1710b).